The primary structure comprises 120 residues: Nitrogen regulatory protein GlnK1 (120 aa).

ADP-binding positions include T40, 48–50 (GEQ), V75, and 98–101 (GDGR). ATP-binding positions include T40, 48 to 50 (GEQ), V75, and 98 to 101 (GDGR).

It belongs to the P(II) protein family. In terms of assembly, homotrimer. Interacts and forms a complex with Amt1.

The protein localises to the cytoplasm. Its function is as follows. Involved in the regulation of nitrogen metabolism. Regulates the activity of its targets by protein-protein interaction in response to the nitrogen status of the cell. Regulates the activity of the ammonia channel Amt1 via direct interaction. In Archaeoglobus fulgidus (strain ATCC 49558 / DSM 4304 / JCM 9628 / NBRC 100126 / VC-16), this protein is Nitrogen regulatory protein GlnK1.